The primary structure comprises 125 residues: Small ribosomal subunit protein uS12 (125 aa).

Residues 9-31 form a disordered region; the sequence is RQGREVEKIKSKSPAMENSPQRR. D89 is subject to 3-methylthioaspartic acid. A disordered region spans residues 105–125; the sequence is QGVKDRKQSRSKYGAKRPKAK. Positions 113–125 are enriched in basic residues; it reads SRSKYGAKRPKAK.

It belongs to the universal ribosomal protein uS12 family. Part of the 30S ribosomal subunit. Contacts proteins S8 and S17. May interact with IF1 in the 30S initiation complex.

Its function is as follows. With S4 and S5 plays an important role in translational accuracy. In terms of biological role, interacts with and stabilizes bases of the 16S rRNA that are involved in tRNA selection in the A site and with the mRNA backbone. Located at the interface of the 30S and 50S subunits, it traverses the body of the 30S subunit contacting proteins on the other side and probably holding the rRNA structure together. The combined cluster of proteins S8, S12 and S17 appears to hold together the shoulder and platform of the 30S subunit. In Polaromonas naphthalenivorans (strain CJ2), this protein is Small ribosomal subunit protein uS12.